A 321-amino-acid chain; its full sequence is MKQNPKISLIGSGNIGGTLAHLISLRELGDIVLFDVTEGVPQGKALDLMQAGTIAGSDIKIKGTNDYKDIEGSDAIIITAGLPRKPGMSRDDLISINTGIMKTVAANVKKYAPDAFVIVITNPLDVMVYVMLKESGLPHNKVIGMAGVLDSSRFNLFLAEEFKVSVSNVNSMVLGGHGDAMVPLARYSTISGVPIPDLIKMGLSSNENIEKIIDRTRNGGGEIVALLKTGSAYYAPAASAIEMLESYLKDKRQILTCAAHLQGEYGVHDLYVGVPIMIGKEGVLKVIELQLTAEEKALFDKSVEGVKKLIETIKEMIKSYY.

NAD(+) is bound by residues 11–16 (GSGNIG) and Asp-35. Positions 84 and 90 each coordinate substrate. Residues Asn-97 and 120-122 (ITN) contribute to the NAD(+) site. The substrate site is built by Asn-122 and Arg-153. The active-site Proton acceptor is His-177.

The protein belongs to the LDH/MDH superfamily. MDH type 3 family.

The catalysed reaction is (S)-malate + NAD(+) = oxaloacetate + NADH + H(+). Catalyzes the reversible oxidation of malate to oxaloacetate. In Rickettsia peacockii (strain Rustic), this protein is Malate dehydrogenase.